A 282-amino-acid polypeptide reads, in one-letter code: Acetylglutamate kinase (282 aa).

Substrate-binding positions include 62–63 (GG), arginine 84, and asparagine 178. L-arginine contacts are provided by residues lysine 196, serine 214, and 266–269 (EIFS).

As to quaternary structure, homohexamer.

It is found in the cytoplasm. It carries out the reaction N-acetyl-L-glutamate + ATP = N-acetyl-L-glutamyl 5-phosphate + ADP. It participates in amino-acid biosynthesis; L-arginine biosynthesis; N(2)-acetyl-L-ornithine from L-glutamate: step 2/4. Its activity is regulated as follows. Allosterically inhibited by arginine. Functionally, catalyzes the ATP-dependent phosphorylation of N-acetyl-L-glutamate. This Thermotoga maritima (strain ATCC 43589 / DSM 3109 / JCM 10099 / NBRC 100826 / MSB8) protein is Acetylglutamate kinase.